The sequence spans 503 residues: Glycerol kinase (503 aa).

Thr-14 is a binding site for ADP. Residues Thr-14, Thr-15, and Ser-16 each contribute to the ATP site. Thr-14 contacts sn-glycerol 3-phosphate. Arg-18 contacts ADP. Arg-84, Glu-85, Tyr-136, and Asp-246 together coordinate sn-glycerol 3-phosphate. Residues Arg-84, Glu-85, Tyr-136, Asp-246, and Gln-247 each contribute to the glycerol site. Residues Thr-268 and Gly-311 each contribute to the ADP site. Residues Thr-268, Gly-311, Gln-315, and Gly-412 each contribute to the ATP site. ADP contacts are provided by Gly-412 and Asn-416.

The protein belongs to the FGGY kinase family.

It catalyses the reaction glycerol + ATP = sn-glycerol 3-phosphate + ADP + H(+). It functions in the pathway polyol metabolism; glycerol degradation via glycerol kinase pathway; sn-glycerol 3-phosphate from glycerol: step 1/1. With respect to regulation, inhibited by fructose 1,6-bisphosphate (FBP). Key enzyme in the regulation of glycerol uptake and metabolism. Catalyzes the phosphorylation of glycerol to yield sn-glycerol 3-phosphate. This chain is Glycerol kinase, found in Haemophilus influenzae (strain PittEE).